The following is a 290-amino-acid chain: Acetyl-coenzyme A carboxylase carboxyl transferase subunit beta (290 aa).

The 263-residue stretch at V28–N290 folds into the CoA carboxyltransferase N-terminal domain. Zn(2+) contacts are provided by C32, C35, C51, and C54. A C4-type zinc finger spans residues C32–C54.

It belongs to the AccD/PCCB family. Acetyl-CoA carboxylase is a heterohexamer composed of biotin carboxyl carrier protein (AccB), biotin carboxylase (AccC) and two subunits each of ACCase subunit alpha (AccA) and ACCase subunit beta (AccD). Requires Zn(2+) as cofactor.

Its subcellular location is the cytoplasm. It catalyses the reaction N(6)-carboxybiotinyl-L-lysyl-[protein] + acetyl-CoA = N(6)-biotinyl-L-lysyl-[protein] + malonyl-CoA. Its pathway is lipid metabolism; malonyl-CoA biosynthesis; malonyl-CoA from acetyl-CoA: step 1/1. Functionally, component of the acetyl coenzyme A carboxylase (ACC) complex. Biotin carboxylase (BC) catalyzes the carboxylation of biotin on its carrier protein (BCCP) and then the CO(2) group is transferred by the transcarboxylase to acetyl-CoA to form malonyl-CoA. In Geobacillus thermodenitrificans (strain NG80-2), this protein is Acetyl-coenzyme A carboxylase carboxyl transferase subunit beta.